Consider the following 31-residue polypeptide: Photosystem II reaction center protein T (31 aa).

Residues 3–23 (SVAYILVLTMTLAVLFFAIAF) form a helical membrane-spanning segment.

This sequence belongs to the PsbT family. PSII is composed of 1 copy each of membrane proteins PsbA, PsbB, PsbC, PsbD, PsbE, PsbF, PsbH, PsbI, PsbJ, PsbK, PsbL, PsbM, PsbT, PsbX, PsbY, PsbZ, Psb30/Ycf12, peripheral proteins PsbO, CyanoQ (PsbQ), PsbU, PsbV and a large number of cofactors. It forms dimeric complexes.

The protein localises to the cellular thylakoid membrane. Functionally, found at the monomer-monomer interface of the photosystem II (PS II) dimer, plays a role in assembly and dimerization of PSII. PSII is a light-driven water plastoquinone oxidoreductase, using light energy to abstract electrons from H(2)O, generating a proton gradient subsequently used for ATP formation. In Rippkaea orientalis (strain PCC 8801 / RF-1) (Cyanothece sp. (strain PCC 8801)), this protein is Photosystem II reaction center protein T.